We begin with the raw amino-acid sequence, 529 residues long: Bifunctional purine biosynthesis protein PurH (529 aa).

Residues 1-148 (MQQRRPVRRA…KNHKDVAIVV (148 aa)) enclose the MGS-like domain. The residue at position 287 (lysine 287) is an N6-acetyllysine.

This sequence belongs to the PurH family.

The enzyme catalyses (6R)-10-formyltetrahydrofolate + 5-amino-1-(5-phospho-beta-D-ribosyl)imidazole-4-carboxamide = 5-formamido-1-(5-phospho-D-ribosyl)imidazole-4-carboxamide + (6S)-5,6,7,8-tetrahydrofolate. It catalyses the reaction IMP + H2O = 5-formamido-1-(5-phospho-D-ribosyl)imidazole-4-carboxamide. It functions in the pathway purine metabolism; IMP biosynthesis via de novo pathway; 5-formamido-1-(5-phospho-D-ribosyl)imidazole-4-carboxamide from 5-amino-1-(5-phospho-D-ribosyl)imidazole-4-carboxamide (10-formyl THF route): step 1/1. Its pathway is purine metabolism; IMP biosynthesis via de novo pathway; IMP from 5-formamido-1-(5-phospho-D-ribosyl)imidazole-4-carboxamide: step 1/1. This Escherichia coli O127:H6 (strain E2348/69 / EPEC) protein is Bifunctional purine biosynthesis protein PurH.